We begin with the raw amino-acid sequence, 89 residues long: Small ribosomal subunit protein uS15 (89 aa).

It belongs to the universal ribosomal protein uS15 family. As to quaternary structure, part of the 30S ribosomal subunit. Forms a bridge to the 50S subunit in the 70S ribosome, contacting the 23S rRNA.

One of the primary rRNA binding proteins, it binds directly to 16S rRNA where it helps nucleate assembly of the platform of the 30S subunit by binding and bridging several RNA helices of the 16S rRNA. Functionally, forms an intersubunit bridge (bridge B4) with the 23S rRNA of the 50S subunit in the ribosome. The polypeptide is Small ribosomal subunit protein uS15 (Staphylococcus saprophyticus subsp. saprophyticus (strain ATCC 15305 / DSM 20229 / NCIMB 8711 / NCTC 7292 / S-41)).